The primary structure comprises 583 residues: NEDD4-binding protein 2-like 2 (583 aa).

Residues 162–197 (NSEKSEIDNELFQFYKEIEELEKEKDGFENSCKESE) are a coiled coil. The tract at residues 549-575 (EPSHKSTQRPPPPQGRQRWGGSLGSHN) is disordered.

The sequence is that of NEDD4-binding protein 2-like 2 (N4BP2L2) from Homo sapiens (Human).